A 644-amino-acid polypeptide reads, in one-letter code: Macrolide export ATP-binding/permease protein MacB (644 aa).

The ABC transporter domain maps to 4-242 (IECKNINRYF…SNVGRIQEKA (239 aa)). 40–47 (GQSGSGKS) is a binding site for ATP. 4 helical membrane passes run 270–290 (LLTMLGIIIGIASVVSVVALG), 524–544 (IALISLVVGGIGVMNIMLVSV), 574–594 (LICVIGGLVGVGLSAAVSLVF), and 607–627 (AMSVIGAVACSTGIGIAFGFM).

Belongs to the ABC transporter superfamily. Macrolide exporter (TC 3.A.1.122) family. Homodimer.

Its subcellular location is the cell inner membrane. Non-canonical ABC transporter that contains transmembrane domains (TMD), which form a pore in the inner membrane, and an ATP-binding domain (NBD), which is responsible for energy generation. Confers resistance against macrolides. The sequence is that of Macrolide export ATP-binding/permease protein MacB from Neisseria meningitidis serogroup A / serotype 4A (strain DSM 15465 / Z2491).